Reading from the N-terminus, the 434-residue chain is Chaperone SurA (434 aa).

A signal peptide spans 1-29 (MKTLRLNFRSAILKALGALLLLQGCLAHA). PpiC domains are found at residues 180–281 (AEEY…AMLE) and 290–389 (VEQS…QVQD).

It is found in the periplasm. The catalysed reaction is [protein]-peptidylproline (omega=180) = [protein]-peptidylproline (omega=0). Its function is as follows. Chaperone involved in the correct folding and assembly of outer membrane proteins. Recognizes specific patterns of aromatic residues and the orientation of their side chains, which are found more frequently in integral outer membrane proteins. May act in both early periplasmic and late outer membrane-associated steps of protein maturation. The polypeptide is Chaperone SurA (Hahella chejuensis (strain KCTC 2396)).